A 177-amino-acid polypeptide reads, in one-letter code: R-phycoerythrin beta chain (177 aa).

The (2R,3E)-phycoerythrobilin site is built by Asn-35 and Asp-39. Positions 50, 54, and 61 each coordinate phycourobilin. (2R,3E)-phycoerythrobilin-binding positions include Asn-72, 77-78 (RR), Cys-82, and 84-85 (RD). Position 72 is an N4-methylasparagine (Asn-72). Position 147 to 148 (147 to 148 (SG)) interacts with phycourobilin. Residue Cys-158 coordinates (2R,3E)-phycoerythrobilin.

This sequence belongs to the phycobiliprotein family. Heterododecamer of 6 alpha and 6 beta chains. The basic functional unit of phycobiliproteins is a ring-shaped hexamer formed from two back-to-back trimers contacting via the alpha chain subunits. The trimers are composed of alpha/beta subunit heterodimers arranged around a three-fold axis of symmetry. The phycoerythrins also contain a gamma subunit which is located in the center of the hexamer. Post-translationally, contains two covalently linked phycoerythrobilin chromophores and one covalently linked phycourobilin chromophore.

Its subcellular location is the plastid. The protein localises to the chloroplast thylakoid membrane. Light-harvesting photosynthetic tetrapyrrole chromophore-protein from the phycobiliprotein complex. The sequence is that of R-phycoerythrin beta chain (cpeB) from Griffithsia monilis (Red alga).